A 337-amino-acid polypeptide reads, in one-letter code: DNA-directed RNA polymerase subunit alpha (337 aa).

Residues 1 to 233 (MVREEVTIST…NLFIPFLHAE (233 aa)) form an alpha N-terminal domain (alpha-NTD) region. The interval 266–337 (GIALKCIFID…FAMNLPKDFF (72 aa)) is alpha C-terminal domain (alpha-CTD).

It belongs to the RNA polymerase alpha chain family. In terms of assembly, in plastids the minimal PEP RNA polymerase catalytic core is composed of four subunits: alpha, beta, beta', and beta''. When a (nuclear-encoded) sigma factor is associated with the core the holoenzyme is formed, which can initiate transcription.

It is found in the plastid. The protein resides in the chloroplast. It catalyses the reaction RNA(n) + a ribonucleoside 5'-triphosphate = RNA(n+1) + diphosphate. DNA-dependent RNA polymerase catalyzes the transcription of DNA into RNA using the four ribonucleoside triphosphates as substrates. This is DNA-directed RNA polymerase subunit alpha from Ceratophyllum demersum (Rigid hornwort).